The primary structure comprises 185 residues: Prenylated Rab acceptor protein 1 (185 aa).

Residues 1–78 (MAAQKDQQKD…RNVEYYQSNY (78 aa)) lie on the Cytoplasmic side of the membrane. Positions 30-54 (AGREWLERRRATIRPWGTFVDQQRF) are required for interaction with prenylated RAB3A and VAMP2. The next 2 membrane-spanning stretches (helical) occupy residues 79–94 (VFVFLGLILYCVVTSP) and 95–112 (MLLVALAVFFGACYILYL). Residues 113 to 131 (RTLQSKLVLFGREVSPAHQ) are Cytoplasmic-facing. 2 helical membrane-spanning segments follow: residues 132–148 (YALAGGVSFPFFWLAGA) and 149–165 (GSAVFWVLGATLVLIGS). The interval 165 to 185 (SHAAFHQIEPADGEELQMEPV) is required for interaction with GDI1. At 166–185 (HAAFHQIEPADGEELQMEPV) the chain is on the cytoplasmic side. The required for interaction with prenylated RAB3A and VAMP2 stretch occupies residues 175-185 (ADGEELQMEPV). The tract at residues 175 to 185 (ADGEELQMEPV) is homodimerization.

It belongs to the PRA1 family. As to quaternary structure, homodimers. Interacts specifically with both prenylated Rab proteins (including RAB3A and RAB1), and VAMP2 (synaptobrevin-2), in an exclusive way. Interacts with NDRG1. Interacts with free GDI1 in the absence of Rab proteins. Also interacts with PCLO. As to expression, ubiquitous.

It is found in the cell membrane. The protein localises to the cytoplasm. Its subcellular location is the golgi apparatus. The protein resides in the cytoplasmic vesicle. It localises to the secretory vesicle. It is found in the synaptic vesicle. General Rab protein regulator required for vesicle formation from the Golgi complex. May control vesicle docking and fusion by mediating the action of Rab GTPases to the SNARE complexes. In addition it inhibits the removal of Rab GTPases from the membrane by GDI1. The sequence is that of Prenylated Rab acceptor protein 1 (Rabac1) from Rattus norvegicus (Rat).